The sequence spans 210 residues: Casparian strip membrane protein 1 (210 aa).

Residues Met1–Leu25 are disordered. The Cytoplasmic segment spans residues Met1 to Gly48. The helical transmembrane segment at Val49–Ile69 threads the bilayer. Residues Thr70–Thr98 are Extracellular-facing. The helical transmembrane segment at Phe99–Ile119 threads the bilayer. Residues Val120–Asp138 are Cytoplasmic-facing. The helical transmembrane segment at Thr139–Ala159 threads the bilayer. The Extracellular segment spans residues His160 to Ser183. A helical transmembrane segment spans residues Gly184 to Ala204. At Ser205–His210 the chain is on the cytoplasmic side.

The protein belongs to the Casparian strip membrane proteins (CASP) family. Homodimer and heterodimers.

Its subcellular location is the cell membrane. Regulates membrane-cell wall junctions and localized cell wall deposition. Required for establishment of the Casparian strip membrane domain (CSD) and the subsequent formation of Casparian strips, a cell wall modification of the root endodermis that determines an apoplastic barrier between the intraorganismal apoplasm and the extraorganismal apoplasm and prevents lateral diffusion. This Erythranthe guttata (Yellow monkey flower) protein is Casparian strip membrane protein 1.